Consider the following 93-residue polypeptide: Cell division protein CrgA (93 aa).

A run of 2 helical transmembrane segments spans residues 31 to 51 (VWFV…LMVF) and 70 to 90 (LGPW…LLTM).

It belongs to the CrgA family.

The protein localises to the cell membrane. Involved in cell division. This is Cell division protein CrgA from Mycobacterium bovis (strain ATCC BAA-935 / AF2122/97).